The sequence spans 429 residues: Enolase (429 aa).

Position 169 (Q169) interacts with (2R)-2-phosphoglycerate. The Proton donor role is filled by E211. Residues D248, E289, and D316 each coordinate Mg(2+). (2R)-2-phosphoglycerate-binding residues include K341, R370, S371, and K392. K341 functions as the Proton acceptor in the catalytic mechanism.

This sequence belongs to the enolase family. Mg(2+) serves as cofactor.

Its subcellular location is the cytoplasm. It localises to the secreted. The protein localises to the cell surface. It catalyses the reaction (2R)-2-phosphoglycerate = phosphoenolpyruvate + H2O. Its pathway is carbohydrate degradation; glycolysis; pyruvate from D-glyceraldehyde 3-phosphate: step 4/5. In terms of biological role, catalyzes the reversible conversion of 2-phosphoglycerate (2-PG) into phosphoenolpyruvate (PEP). It is essential for the degradation of carbohydrates via glycolysis. The polypeptide is Enolase (Anaplasma phagocytophilum (strain HZ)).